A 354-amino-acid polypeptide reads, in one-letter code: NADH-quinone oxidoreductase subunit H (354 aa).

Transmembrane regions (helical) follow at residues 25–45 (LVRI…LILW), 91–111 (WLYL…WAVI), 126–146 (LLYA…AGWA), 170–190 (MGFA…SEIV), 205–225 (FLSW…ISGI), 253–273 (MAFA…SALA), 290–310 (FIPG…VFIW), and 330–350 (VFLP…MSPL).

The protein belongs to the complex I subunit 1 family. As to quaternary structure, NDH-1 is composed of 14 different subunits. Subunits NuoA, H, J, K, L, M, N constitute the membrane sector of the complex.

The protein localises to the cell inner membrane. It catalyses the reaction a quinone + NADH + 5 H(+)(in) = a quinol + NAD(+) + 4 H(+)(out). Functionally, NDH-1 shuttles electrons from NADH, via FMN and iron-sulfur (Fe-S) centers, to quinones in the respiratory chain. The immediate electron acceptor for the enzyme in this species is believed to be ubiquinone. Couples the redox reaction to proton translocation (for every two electrons transferred, four hydrogen ions are translocated across the cytoplasmic membrane), and thus conserves the redox energy in a proton gradient. This subunit may bind ubiquinone. The chain is NADH-quinone oxidoreductase subunit H from Burkholderia mallei (strain ATCC 23344).